Here is a 502-residue protein sequence, read N- to C-terminus: Xyloglucan-specific endo-beta-1,4-glucanase BoGH5A (502 aa).

The first 32 residues, 1 to 32, serve as a signal peptide directing secretion; it reads MEKQSFSDGLFSPLGIKRVIFMLVLLTTSFIS. Residue Cys-33 is the site of N-palmitoyl cysteine attachment. Cys-33 is lipidated: S-diacylglycerol cysteine. One can recognise a BACON domain in the interval 67–127; it reads GPAEWHISTS…PDIIINVKQS (61 aa). Substrate contacts are provided by Asn-165, Val-172, His-251, and Asn-296. Residue Glu-297 is the Proton donor of the active site. The active-site Nucleophile is Glu-430. Trp-472 is a binding site for substrate.

Belongs to the glycosyl hydrolase 5 (cellulase A) family.

It is found in the cell outer membrane. The catalysed reaction is xyloglucan + H2O = xyloglucan oligosaccharides.. The protein operates within glucan metabolism; xyloglucan degradation. Catalyzes endohydrolysis of 1,4-beta-D-glucosidic linkages in xyloglucan with retention of the beta-configuration of the glycosyl residues in xyloglucan degradation. Cleaves the backbone of the 3 major types of natural xyloglucans (seed galactoxyloglucan from tamarind kernel, dicot fucogalactoxyloglucan from lettuce leaves, and solanaceous arabinogalactoxyloglucan from tomato fruit), to produce xyloglucan oligosaccharides. The sequence is that of Xyloglucan-specific endo-beta-1,4-glucanase BoGH5A from Bacteroides ovatus (strain ATCC 8483 / DSM 1896 / JCM 5824 / BCRC 10623 / CCUG 4943 / NCTC 11153).